The chain runs to 79 residues: Small ribosomal subunit protein bS18c (79 aa).

Belongs to the bacterial ribosomal protein bS18 family. In terms of assembly, part of the 30S ribosomal subunit.

The protein resides in the plastid. The protein localises to the chloroplast. The chain is Small ribosomal subunit protein bS18c from Chaetosphaeridium globosum (Charophycean green alga).